Here is a 294-residue protein sequence, read N- to C-terminus: Nucleotide-binding protein LCA_0526 (294 aa).

12–19 lines the ATP pocket; it reads GMSGAGKT. GTP is bound at residue 62-65; the sequence is DLRS.

This sequence belongs to the RapZ-like family.

Functionally, displays ATPase and GTPase activities. This is Nucleotide-binding protein LCA_0526 from Latilactobacillus sakei subsp. sakei (strain 23K) (Lactobacillus sakei subsp. sakei).